The primary structure comprises 417 residues: Putative competence-damage inducible protein (417 aa).

The protein belongs to the CinA family.

The chain is Putative competence-damage inducible protein from Oceanobacillus iheyensis (strain DSM 14371 / CIP 107618 / JCM 11309 / KCTC 3954 / HTE831).